The chain runs to 221 residues: NIP3 homolog (221 aa).

Residues 24–55 (GEKTDESVQPQQQTEQSSAQQTTPSAKAVSNP) are disordered. Residue lysine 26 forms a Glycyl lysine isopeptide (Lys-Gly) (interchain with G-Cter in ubiquitin) linkage. Positions 32–49 (QPQQQTEQSSAQQTTPSA) are enriched in low complexity. A helical membrane pass occupies residues 189–209 (VVFGFLVTNIFSFVVGAAVGF). Residues 189-209 (VVFGFLVTNIFSFVVGAAVGF) form a required for initiation of apoptosis region.

Belongs to the NIP3 family. As to quaternary structure, homodimer; via transmembrane domain. Interacts with ced-3 and ced-9. Post-translationally, ubiquitinated and degraded by the proteasome. Under oxidative stress conditions, ubiquitinated at Lys-26 in a pink-1 dependent manner. Colocalizes with pdr-1 and may be ubiquitinated by it. Expressed in all somatic tissues including neurons, pharynx, intestine, body wall muscles and vulva muscles.

The protein resides in the mitochondrion outer membrane. Its function is as follows. Initiates apoptosis in a BH3-independent mechanism possibly by recruiting ced-3 to mitochondria and other cytoplasmic membranes. Has a role in lifespan and tumor growth. Required for the induction of mitophagy under stress conditions. This chain is NIP3 homolog, found in Caenorhabditis elegans.